A 280-amino-acid chain; its full sequence is uncharacterized protein (280 aa).

6 helical membrane-spanning segments follow: residues 46–66 (LIFL…FVCT), 81–101 (IACS…FLIP), 114–134 (FFYL…SWVV), 137–157 (VWHF…IKLQ), 170–190 (ILFI…LLEL), and 225–245 (IVAC…ALIV). Residues 258–280 (ESGSIEKKNKSSPPPRTWQSNYQ) form a disordered region.

This sequence belongs to the TatC family.

The protein resides in the mitochondrion membrane. This is an uncharacterized protein from Arabidopsis thaliana (Mouse-ear cress).